The chain runs to 175 residues: Gamma-crystallin B (175 aa).

2 consecutive Beta/gamma crystallin 'Greek key' domains span residues Gly-2–Ser-40 and Gly-41–Pro-83. The connecting peptide stretch occupies residues Gln-84–Thr-88. Beta/gamma crystallin 'Greek key' domains are found at residues Phe-89–Asp-129 and Gly-130–Met-172.

This sequence belongs to the beta/gamma-crystallin family. Monomer.

Its function is as follows. Crystallins are the dominant structural components of the vertebrate eye lens. The protein is Gamma-crystallin B (CRYGB) of Canis lupus familiaris (Dog).